The primary structure comprises 325 residues: Brain mitochondrial carrier protein 1 (325 aa).

6 helical membrane-spanning segments follow: residues 38 to 54, 112 to 128, 141 to 161, 199 to 215, 240 to 256, and 298 to 315; these read GLNWKPFVYGGLASIVA, LRQASYGTIKIGIYQSL, LLINMICGVVSGVISSTIANP, GVVPTAQRAAIVVGVEL, VSSFTCGLAGALASNPV, and GFWPNWLRLGPWNIIFFI. 3 Solcar repeats span residues 42 to 131, 139 to 224, and 233 to 323; these read KPFV…LKRL, ETLL…TKKH, and DTIL…LKRL.

Belongs to the mitochondrial carrier (TC 2.A.29) family. In terms of assembly, homotetramer. As to expression, mainly expressed in brain. Some expression in testis and pituitary.

It localises to the mitochondrion inner membrane. The catalysed reaction is sulfite(in) + sulfate(out) = sulfite(out) + sulfate(in). It carries out the reaction thiosulfate(in) + sulfate(out) = thiosulfate(out) + sulfate(in). The enzyme catalyses sulfate(out) + phosphate(in) = sulfate(in) + phosphate(out). It catalyses the reaction oxalate(in) + sulfate(out) = oxalate(out) + sulfate(in). The catalysed reaction is malonate(in) + sulfate(out) = malonate(out) + sulfate(in). It carries out the reaction maleate(in) + sulfate(out) = maleate(out) + sulfate(in). The enzyme catalyses (S)-malate(in) + sulfate(out) = (S)-malate(out) + sulfate(in). It catalyses the reaction (3S)-citramalate(in) + sulfate(out) = (3S)-citramalate(out) + sulfate(in). The catalysed reaction is (3R)-citramalate(in) + sulfate(out) = (3R)-citramalate(out) + sulfate(in). It carries out the reaction sulfate(out) + succinate(in) = sulfate(in) + succinate(out). The enzyme catalyses (S,S)-tartrate(in) + sulfate(out) = (S,S)-tartrate(out) + sulfate(in). It catalyses the reaction (2R,3R)-tartrate(in) + sulfate(out) = (2R,3R)-tartrate(out) + sulfate(in). The catalysed reaction is D-aspartate(in) + sulfate(out) = D-aspartate(out) + sulfate(in). It carries out the reaction L-aspartate(in) + sulfate(out) = L-aspartate(out) + sulfate(in). The enzyme catalyses sulfate(in) = sulfate(out). It catalyses the reaction phosphate(in) = phosphate(out). The catalysed reaction is (S)-malate(out) = (S)-malate(in). It carries out the reaction citrate(in) = citrate(out). The enzyme catalyses L-aspartate(out) = L-aspartate(in). It catalyses the reaction L-glutamate(out) = L-glutamate(in). The catalysed reaction is H(+)(in) = H(+)(out). It carries out the reaction chloride(in) = chloride(out). Increased activity at pH lower than 8.0. sulfate/sulfate exchange activity is inhibited strongly by pyridoxal 5'-phosphate, bathophenanthroline and the organic mercurials mersalyl, p-chloromercuribenzoate and HgCl2. Proton conductance is activated by cardiolipin and long-chain free fatty acids and inhibited by purine nucleotides ATP and ADP. Chloride ion transporter activity is inhibited by long-chain free fatty acids. In terms of biological role, transports inorganic anions (sulfate, sulfite, thiosulfate and phosphate) and, to a lesser extent, a variety of dicarboxylates (e.g. malonate, malate and citramalate) and, even more so, aspartate and glutamate and tricarboxylates. May catalyze the export of sulfite and thiosulfate (the hydrogen sulfide degradation products) from the mitochondria, thereby modulating the level of the hydrogen sulfide. Also can mediate a very low unidirectional transport of anions including sulfate, phosphate, (S)-malate, citrate, L-aspartate and L-glutamate. Maintains oxidative balance (through uncoupling activities) and ATP production (by modifying mitochondrial membrane potential). Is able to transport protons across lipid membranes. Also exhibits transmembrane chloride transport activity to a lesser extent. May modify mitochondrial respiratory efficiency and mitochondrial oxidant production. In Homo sapiens (Human), this protein is Brain mitochondrial carrier protein 1.